We begin with the raw amino-acid sequence, 683 residues long: Methionine--tRNA ligase (683 aa).

Positions 14–24 (PYANGSIHLGH) match the 'HIGH' region motif. Cys145, Cys148, Cys158, and Cys161 together coordinate Zn(2+). A 'KMSKS' region motif is present at residues 331 to 335 (KMSKS). Lys334 is an ATP binding site. Residues 545–572 (ASKEDLTASQTDTGAAAPAGNGELAKDP) form a disordered region. One can recognise a tRNA-binding domain in the interval 581-683 (TFAAVDLRVA…SGAKPGQRIK (103 aa)).

The protein belongs to the class-I aminoacyl-tRNA synthetase family. MetG type 1 subfamily. Homodimer. Zn(2+) serves as cofactor.

Its subcellular location is the cytoplasm. It carries out the reaction tRNA(Met) + L-methionine + ATP = L-methionyl-tRNA(Met) + AMP + diphosphate. In terms of biological role, is required not only for elongation of protein synthesis but also for the initiation of all mRNA translation through initiator tRNA(fMet) aminoacylation. The chain is Methionine--tRNA ligase from Pseudomonas fluorescens (strain Pf0-1).